We begin with the raw amino-acid sequence, 20 residues long: Cathepsin L1 (20 aa).

Over residues 1–10 the composition is skewed to basic and acidic residues; it reads AVPDKIDPRE. Residues 1 to 20 are disordered; it reads AVPDKIDPRESGYVTGVKDQ.

Belongs to the peptidase C1 family. In terms of assembly, dimer of a heavy and a light chain linked by disulfide bonds.

It localises to the lysosome. It carries out the reaction Specificity close to that of papain. As compared to cathepsin B, cathepsin L exhibits higher activity toward protein substrates, but has little activity on Z-Arg-Arg-NHMec, and no peptidyl-dipeptidase activity.. In terms of biological role, thiol protease that assists the parasite in burrowing through the gut wall and liver of its mammalian host. In Fasciola hepatica (Liver fluke), this protein is Cathepsin L1.